We begin with the raw amino-acid sequence, 309 residues long: Homoserine kinase (309 aa).

Residue 91 to 101 participates in ATP binding; the sequence is PIGSGLGSSAC.

It belongs to the GHMP kinase family. Homoserine kinase subfamily.

Its subcellular location is the cytoplasm. It carries out the reaction L-homoserine + ATP = O-phospho-L-homoserine + ADP + H(+). The protein operates within amino-acid biosynthesis; L-threonine biosynthesis; L-threonine from L-aspartate: step 4/5. In terms of biological role, catalyzes the ATP-dependent phosphorylation of L-homoserine to L-homoserine phosphate. The polypeptide is Homoserine kinase (Pectobacterium carotovorum subsp. carotovorum (strain PC1)).